Reading from the N-terminus, the 529-residue chain is Bifunctional purine biosynthesis protein PurH (529 aa).

Residues 1–148 (MNNARPIRRA…KNHKDTTIIV (148 aa)) form the MGS-like domain.

This sequence belongs to the PurH family.

The enzyme catalyses (6R)-10-formyltetrahydrofolate + 5-amino-1-(5-phospho-beta-D-ribosyl)imidazole-4-carboxamide = 5-formamido-1-(5-phospho-D-ribosyl)imidazole-4-carboxamide + (6S)-5,6,7,8-tetrahydrofolate. It catalyses the reaction IMP + H2O = 5-formamido-1-(5-phospho-D-ribosyl)imidazole-4-carboxamide. Its pathway is purine metabolism; IMP biosynthesis via de novo pathway; 5-formamido-1-(5-phospho-D-ribosyl)imidazole-4-carboxamide from 5-amino-1-(5-phospho-D-ribosyl)imidazole-4-carboxamide (10-formyl THF route): step 1/1. It participates in purine metabolism; IMP biosynthesis via de novo pathway; IMP from 5-formamido-1-(5-phospho-D-ribosyl)imidazole-4-carboxamide: step 1/1. In Shewanella pealeana (strain ATCC 700345 / ANG-SQ1), this protein is Bifunctional purine biosynthesis protein PurH.